The following is a 27-amino-acid chain: Omega-conotoxin RVIA (27 aa).

3 cysteine pairs are disulfide-bonded: C1–C16, C8–C19, and C15–C26. Residues P4 and P7 each carry the 4-hydroxyproline modification.

Belongs to the conotoxin O1 superfamily. In terms of tissue distribution, expressed by the venom duct.

The protein resides in the secreted. Functionally, omega-conotoxins act at presynaptic membranes, they bind and block voltage-gated calcium channels (Cav). The polypeptide is Omega-conotoxin RVIA (Conus radiatus (Rayed cone)).